The sequence spans 501 residues: Cytochrome P450 71D6 (501 aa).

Cys442 serves as a coordination point for heme.

This sequence belongs to the cytochrome P450 family. The cofactor is heme.

The protein is Cytochrome P450 71D6 (CYP71D6) of Solanum chacoense (Chaco potato).